The primary structure comprises 306 residues: Glycine--tRNA ligase alpha subunit (306 aa).

Belongs to the class-II aminoacyl-tRNA synthetase family. In terms of assembly, tetramer of two alpha and two beta subunits.

It localises to the cytoplasm. The enzyme catalyses tRNA(Gly) + glycine + ATP = glycyl-tRNA(Gly) + AMP + diphosphate. This Aliivibrio fischeri (strain ATCC 700601 / ES114) (Vibrio fischeri) protein is Glycine--tRNA ligase alpha subunit.